Reading from the N-terminus, the 434-residue chain is tRNA dimethylallyltransferase (434 aa).

Residue Gly-10 to Ser-17 coordinates ATP. Thr-12 to Ser-17 contributes to the substrate binding site. 2 interaction with substrate tRNA regions span residues Asp-35 to Gln-38 and Arg-166 to Arg-170. Residues Ser-211–Glu-233 form an interaction with isopentenylpyrophosphate transferase region. Interaction with substrate tRNA regions lie at residues Gln-256–Ile-258, Arg-281–Ser-299, and Lys-291–Gln-298. A Matrin-type zinc finger spans residues Phe-380–Arg-416.

It belongs to the IPP transferase family.

It localises to the mitochondrion. Its subcellular location is the cytoplasm. The protein resides in the nucleus. It carries out the reaction adenosine(37) in tRNA + dimethylallyl diphosphate = N(6)-dimethylallyladenosine(37) in tRNA + diphosphate. In terms of biological role, catalyzes the transfer of a dimethylallyl group onto the adenine at position 37 of both cytosolic and mitochondrial tRNAs, leading to the formation of N6-(dimethylallyl)adenosine (i(6)A). This is tRNA dimethylallyltransferase (tit1) from Schizosaccharomyces pombe (strain 972 / ATCC 24843) (Fission yeast).